Here is a 215-residue protein sequence, read N- to C-terminus: Deoxyribose-phosphate aldolase (215 aa).

Asp89 functions as the Proton donor/acceptor in the catalytic mechanism. Lys150 serves as the catalytic Schiff-base intermediate with acetaldehyde. Catalysis depends on Lys174, which acts as the Proton donor/acceptor.

Belongs to the DeoC/FbaB aldolase family. DeoC type 1 subfamily.

It is found in the cytoplasm. The catalysed reaction is 2-deoxy-D-ribose 5-phosphate = D-glyceraldehyde 3-phosphate + acetaldehyde. Its pathway is carbohydrate degradation; 2-deoxy-D-ribose 1-phosphate degradation; D-glyceraldehyde 3-phosphate and acetaldehyde from 2-deoxy-alpha-D-ribose 1-phosphate: step 2/2. In terms of biological role, catalyzes a reversible aldol reaction between acetaldehyde and D-glyceraldehyde 3-phosphate to generate 2-deoxy-D-ribose 5-phosphate. The protein is Deoxyribose-phosphate aldolase of Natronomonas pharaonis (strain ATCC 35678 / DSM 2160 / CIP 103997 / JCM 8858 / NBRC 14720 / NCIMB 2260 / Gabara) (Halobacterium pharaonis).